The sequence spans 195 residues: Glycerol-3-phosphate acyltransferase (195 aa).

Helical transmembrane passes span 7-27 (IFILCYLIGSIPFGFILSYVI), 52-72 (LALLTLLLDALKSFICVAIAQ), 80-100 (ILFLAALFAIIGHMFPVYLFF), 113-133 (LIFIDYRVAVCFLTFWIICFL), and 147-167 (LIALLFICTCYTIVQSVIFTI).

This sequence belongs to the PlsY family. In terms of assembly, probably interacts with PlsX.

The protein localises to the cell inner membrane. It carries out the reaction an acyl phosphate + sn-glycerol 3-phosphate = a 1-acyl-sn-glycero-3-phosphate + phosphate. Its pathway is lipid metabolism; phospholipid metabolism. In terms of biological role, catalyzes the transfer of an acyl group from acyl-phosphate (acyl-PO(4)) to glycerol-3-phosphate (G3P) to form lysophosphatidic acid (LPA). This enzyme utilizes acyl-phosphate as fatty acyl donor, but not acyl-CoA or acyl-ACP. The protein is Glycerol-3-phosphate acyltransferase of Ehrlichia ruminantium (strain Welgevonden).